The chain runs to 245 residues: tRNA (guanine-N(7)-)-methyltransferase (245 aa).

Residues glutamate 75, glutamate 100, aspartate 127, and aspartate 149 each coordinate S-adenosyl-L-methionine. The active site involves aspartate 149. Substrate-binding positions include lysine 153, aspartate 185, and 222–225 (TKFE).

Belongs to the class I-like SAM-binding methyltransferase superfamily. TrmB family.

It carries out the reaction guanosine(46) in tRNA + S-adenosyl-L-methionine = N(7)-methylguanosine(46) in tRNA + S-adenosyl-L-homocysteine. Its pathway is tRNA modification; N(7)-methylguanine-tRNA biosynthesis. Functionally, catalyzes the formation of N(7)-methylguanine at position 46 (m7G46) in tRNA. The polypeptide is tRNA (guanine-N(7)-)-methyltransferase (Acinetobacter baylyi (strain ATCC 33305 / BD413 / ADP1)).